Here is a 46-residue protein sequence, read N- to C-terminus: Iota-conotoxin-like R11.7 (46 aa).

Pro-2 and Pro-11 each carry 4-hydroxyproline. 4 disulfide bridges follow: Cys-5/Cys-19, Cys-12/Cys-22, Cys-18/Cys-27, and Cys-21/Cys-38. 4-hydroxyproline is present on Pro-29. A D-phenylalanine modification is found at Phe-44.

It belongs to the conotoxin I1 superfamily. In terms of tissue distribution, expressed by the venom duct.

The protein resides in the secreted. Functionally, iota-conotoxins bind to voltage-gated sodium channels (Nav) and act as agonists by shifting the voltage-dependence of activation to more hyperpolarized levels. Produces general excitatory symptoms. The chain is Iota-conotoxin-like R11.7 from Conus radiatus (Rayed cone).